A 453-amino-acid polypeptide reads, in one-letter code: Acyl-coenzyme A thioesterase 2, mitochondrial (453 aa).

The transit peptide at 1 to 42 (MVASSFAVLRASRLCQWGWKSWTQLSGPPPLSTGGRTTFART) directs the protein to the mitochondrion. Lys83 is modified (N6-acetyllysine). Active-site charge relay system residues include Ser273, Asp365, and His399. At Lys447 the chain carries N6-succinyllysine.

It belongs to the C/M/P thioester hydrolase family. Monomer. In terms of processing, the N-terminus is blocked. Constitutively expressed in heart and brown fat. Strongly induced in liver, and weakly in kidney, in peroxisome proliferator treated rat.

The protein localises to the mitochondrion matrix. It catalyses the reaction hexadecanoyl-CoA + H2O = hexadecanoate + CoA + H(+). The enzyme catalyses tetradecanoyl-CoA + H2O = tetradecanoate + CoA + H(+). It carries out the reaction octadecanoyl-CoA + H2O = octadecanoate + CoA + H(+). The catalysed reaction is eicosanoyl-CoA + H2O = eicosanoate + CoA + H(+). It catalyses the reaction decanoyl-CoA + H2O = decanoate + CoA + H(+). The enzyme catalyses dodecanoyl-CoA + H2O = dodecanoate + CoA + H(+). It carries out the reaction (9Z)-octadecenoyl-CoA + H2O = (9Z)-octadecenoate + CoA + H(+). The catalysed reaction is (9Z)-hexadecenoyl-CoA + H2O = (9Z)-hexadecenoate + CoA + H(+). It catalyses the reaction (9E)-octadecenoyl-CoA + H2O = (9E)-octadecenoate + CoA + H(+). The enzyme catalyses (9Z,12Z)-octadecadienoyl-CoA + H2O = (9Z,12Z)-octadecadienoate + CoA + H(+). Its pathway is lipid metabolism; fatty acid metabolism. In terms of biological role, catalyzes the hydrolysis of acyl-CoAs into free fatty acids and coenzyme A (CoASH), regulating their respective intracellular levels. Displays higher activity toward long chain acyl CoAs (C14-C20). The enzyme is involved in enhancing the hepatic fatty acid oxidation in mitochondria. The polypeptide is Acyl-coenzyme A thioesterase 2, mitochondrial (Acot2) (Rattus norvegicus (Rat)).